The sequence spans 758 residues: Maturase-like protein 2 (758 aa).

The protein resides in the plastid. It is found in the chloroplast. The sequence is that of Maturase-like protein 2 (mat2) from Euglena gracilis.